Consider the following 260-residue polypeptide: Carbonic anhydrase 2 (260 aa).

Ser2 is modified (N-acetylserine). Residue Ser2 is modified to Phosphoserine. Residues His3 to Phe259 form the Alpha-carbonic anhydrase domain. Catalysis depends on His64, which acts as the Proton acceptor. The active site involves Asn67. Residue Ser87 is modified to Phosphoserine. Zn(2+)-binding residues include His94, His96, and His119. Tyr127 is an active-site residue. Ser165 is subject to Phosphoserine. Thr198–Thr199 serves as a coordination point for substrate.

This sequence belongs to the alpha-carbonic anhydrase family. Interacts with SLC4A4. Interaction with SLC4A7 regulates SLC4A7 transporter activity. Interacts with SLC26A6. Requires Zn(2+) as cofactor.

It is found in the cytoplasm. The protein resides in the cell membrane. It carries out the reaction hydrogencarbonate + H(+) = CO2 + H2O. The enzyme catalyses urea = cyanamide + H2O. Inhibited by acetazolamide. Its function is as follows. Catalyzes the reversible hydration of carbon dioxide. Can also hydrate cyanamide to urea. Involved in the regulation of fluid secretion into the anterior chamber of the eye. Essential for bone resorption and osteoclast differentiation. Contributes to intracellular pH regulation in the duodenal upper villous epithelium during proton-coupled peptide absorption. Stimulates the chloride-bicarbonate exchange activity of SLC26A6. The sequence is that of Carbonic anhydrase 2 (Ca2) from Mus musculus (Mouse).